A 507-amino-acid polypeptide reads, in one-letter code: ATP synthase subunit alpha, chloroplastic (507 aa).

170–177 provides a ligand contact to ATP; sequence GDRQTGKT.

Belongs to the ATPase alpha/beta chains family. F-type ATPases have 2 components, CF(1) - the catalytic core - and CF(0) - the membrane proton channel. CF(1) has five subunits: alpha(3), beta(3), gamma(1), delta(1), epsilon(1). CF(0) has four main subunits: a, b, b' and c.

It is found in the plastid. The protein resides in the chloroplast thylakoid membrane. The catalysed reaction is ATP + H2O + 4 H(+)(in) = ADP + phosphate + 5 H(+)(out). In terms of biological role, produces ATP from ADP in the presence of a proton gradient across the membrane. The alpha chain is a regulatory subunit. This is ATP synthase subunit alpha, chloroplastic from Gossypium barbadense (Sea Island cotton).